A 436-amino-acid chain; its full sequence is Prenyltransferase nscD (436 aa).

The protein belongs to the tryptophan dimethylallyltransferase family.

It participates in secondary metabolite biosynthesis. Its function is as follows. Prenyltransferase; part of the gene cluster that mediates the biosynthesis of neosartoricin B, a prenylated anthracenone that probably exhibits T-cell antiproliferative activity, suggestive of a physiological role as an immunosuppressive agent. The non-reducing polyketide synthase nscA probably synthesizes and cyclizes the decaketide backbone. The hydrolase nscB then mediates the product release through hydrolysis followed by spontaneous decarboxylation. The prenyltransferase nscD catalyzes the addition of the dimethylallyl group to the aromatic C5. The FAD-dependent monooxygenase nscC is then responsible for the stereospecific hydroxylation at C2. Neosartoricin B can be converted into two additional compounds neosartoricins C and D. Neosartoricin C is a spirocyclic compound that is cyclized through the attack of C3 hydroxyl on C14, followed by dehydration. On the other hand, neosartoricin D is a further cyclized compound in which attack of C2 on C14 in neosartoricin C results in the formation of the acetal-containing dioxabicyclo-octanone ring. Both of these compounds are novel and possibly represent related metabolites of the gene cluster. The sequence is that of Prenyltransferase nscD from Trichophyton tonsurans (strain CBS 112818) (Scalp ringworm fungus).